A 500-amino-acid chain; its full sequence is Vitamin D(3) 25-hydroxylase (500 aa).

C446 is a heme binding site.

Belongs to the cytochrome P450 family. Heme is required as a cofactor. Found in liver and kidney.

The protein localises to the endoplasmic reticulum membrane. It is found in the microsome membrane. It catalyses the reaction calciol + reduced [NADPH--hemoprotein reductase] + O2 = calcidiol + oxidized [NADPH--hemoprotein reductase] + H2O + H(+). The enzyme catalyses alfacalcidol + reduced [NADPH--hemoprotein reductase] + O2 = calcitriol + oxidized [NADPH--hemoprotein reductase] + H2O + H(+). The catalysed reaction is dodecanoate + reduced [NADPH--hemoprotein reductase] + O2 = 12-hydroxydodecanoate + oxidized [NADPH--hemoprotein reductase] + H2O + H(+). It carries out the reaction dodecanoate + reduced [NADPH--hemoprotein reductase] + O2 = 11-hydroxydodecanoate + oxidized [NADPH--hemoprotein reductase] + H2O + H(+). It catalyses the reaction 5beta-cholestane-3alpha,7alpha-diol + reduced [NADPH--hemoprotein reductase] + O2 = 5beta-cholestane-3alpha,7alpha,25-triol + oxidized [NADPH--hemoprotein reductase] + H2O + H(+). The enzyme catalyses 5beta-cholestane-3alpha,7alpha,12alpha-triol + reduced [NADPH--hemoprotein reductase] + O2 = 5beta-cholestane-3alpha,7alpha,12alpha,25-tetrol + oxidized [NADPH--hemoprotein reductase] + H2O + H(+). Catalyzes the 25-hydroxylation of vitamin D(3) (calciol), 1alpha-hydroxyvitamin D(3) (alphacalcidiol) and some C27 steroids. In addition the enzyme catalyzes the hydroxylation of positions 11 and 12 of dodecanoate. The protein is Vitamin D(3) 25-hydroxylase (CYP2D25) of Sus scrofa (Pig).